We begin with the raw amino-acid sequence, 811 residues long: Ribosome biogenesis protein ERB1 (811 aa).

The segment covering 1–11 (MARNSKATDTP) has biased composition (polar residues). Residues 1-138 (MARNSKATDT…VHTKFSDGRP (138 aa)) form a disordered region. Acidic residues predominate over residues 27-96 (EDAEESSSDE…LSDVDSEEFS (70 aa)). The segment covering 104–121 (ASITDKLSGTKIRSYSNA) has biased composition (polar residues). Over residues 128–138 (EVHTKFSDGRP) the composition is skewed to basic and acidic residues. Residues 270–386 (RFVPSKHEAK…LRKVPGYQEG (117 aa)) form a required for interaction with NOP7 region. The tract at residues 386–422 (GLRERFERCLDLYLAPRTRHNKLNIDPDSLIPELPSP) is required for interaction with YTM1. WD repeat units follow at residues 438-477 (GHTEKIRTLSISPDGLWLATGSDDGSVRIWEILTGRQVYK) and 485-525 (NTDD…FDIE). Residues 547–566 (TKNSNIKVNSDDEDEEVEKA) form a disordered region. WD repeat units lie at residues 595–637 (QCRK…SQSP), 640–678 (KSKGIIMDAKFHPFKPQLFVASQRYIRIYDLAQQVLVKK), 681–720 (PGARWLSNIDIHPRGDNLLASSYDKRVLWHDLDLSSTPYK), 724–764 (YHDK…DLMT), and 780–811 (INSLGVLDLVWHPKEAWLFSAGADGTARLWTT).

This sequence belongs to the WD repeat BOP1/ERB1 family. Component of the NOP7 complex, composed of ERB1, NOP7 and YTM1. The complex is held together by ERB1, which interacts with NOP7 via its N-terminal domain and with YTM1 via a high-affinity interaction between the seven-bladed beta-propeller domains of the 2 proteins. The NOP7 complex associates with the 66S pre-ribosome.

The protein resides in the nucleus. The protein localises to the nucleolus. Its subcellular location is the nucleoplasm. Component of the NOP7 complex, which is required for maturation of the 25S and 5.8S ribosomal RNAs and formation of the 60S ribosome. The polypeptide is Ribosome biogenesis protein ERB1 (Debaryomyces hansenii (strain ATCC 36239 / CBS 767 / BCRC 21394 / JCM 1990 / NBRC 0083 / IGC 2968) (Yeast)).